We begin with the raw amino-acid sequence, 508 residues long: Bifunctional NAD(P)H-hydrate repair enzyme Nnr (508 aa).

Residues 1 to 224 (MSGLCACTLV…QVRSVLGEDH (224 aa)) form an NAD(P)H-hydrate epimerase region. One can recognise a YjeF N-terminal domain in the interval 15-217 (VQQLEAALFA…EIGFSEAQVR (203 aa)). The interval 64–68 (HNGGD) is NADPHX 1; for epimerase activity. K(+)-binding residues include asparagine 65 and aspartate 126. The segment at 130–136 (GFGLERP) is NADPHX 1; for epimerase activity. Residues tyrosine 141 and aspartate 159 each contribute to the (6S)-NADPHX site. Serine 162 is a K(+) binding site. The 275-residue stretch at 232–506 (PDAARAGLPL…LGLLPFLAAD (275 aa)) folds into the YjeF C-terminal domain. Residues 232–508 (PDAARAGLPL…LLPFLAADGP (277 aa)) are ADP-dependent (S)-NAD(P)H-hydrate dehydratase. Residue glycine 334 participates in (6S)-NADPHX binding. The NADPHX 2; for dehydratase activity stretch occupies residues 383 to 389 (HPGEFKR). Residues 417-421 (KGART) and 437-446 (SPALARGGSG) contribute to the ADP site. (6S)-NADPHX is bound at residue aspartate 447.

The protein in the N-terminal section; belongs to the NnrE/AIBP family. In the C-terminal section; belongs to the NnrD/CARKD family. K(+) is required as a cofactor.

The enzyme catalyses (6S)-NADHX + ADP = AMP + phosphate + NADH + H(+). It catalyses the reaction (6S)-NADPHX + ADP = AMP + phosphate + NADPH + H(+). It carries out the reaction (6R)-NADHX = (6S)-NADHX. The catalysed reaction is (6R)-NADPHX = (6S)-NADPHX. Functionally, bifunctional enzyme that catalyzes the epimerization of the S- and R-forms of NAD(P)HX and the dehydration of the S-form of NAD(P)HX at the expense of ADP, which is converted to AMP. This allows the repair of both epimers of NAD(P)HX, a damaged form of NAD(P)H that is a result of enzymatic or heat-dependent hydration. The polypeptide is Bifunctional NAD(P)H-hydrate repair enzyme Nnr (nnr) (Gloeobacter violaceus (strain ATCC 29082 / PCC 7421)).